Reading from the N-terminus, the 144-residue chain is Cytochrome c'' (144 aa).

The N-terminal stretch at 1-20 (MKIKTIIAVFGVLFSAHALA) is a signal peptide. Heme c is bound by residues Cys-69, Cys-72, His-73, and His-115. An intrachain disulfide couples Cys-116 to Cys-124.

As to quaternary structure, monomer. In terms of processing, binds 1 heme c group covalently per subunit. The heme is low-spin in the oxidized state but switches to a high-spin form upon reduction, due to the dissociation of one of the axial histidines, His-115.

The chain is Cytochrome c'' (cycA) from Methylophilus methylotrophus (Bacterium W3A1).